The following is a 686-amino-acid chain: Rhophilin-2 (686 aa).

Residues 26 to 100 enclose the REM-1 domain; that stretch reads NPLAQTGRSK…LEGLNISVGV (75 aa). Positions 46–66 are interaction with Rho; that stretch reads QILKAVRMRTGAENLLKVATN. A BRO1 domain is found at 111-502; it reads PLIPLGLKET…TDFFQKLGPL (392 aa). The 79-residue stretch at 515-593 folds into the PDZ domain; the sequence is RGIHFTVEEG…EEVEMKVVSL (79 aa). Thr-655 carries the phosphothreonine modification.

This sequence belongs to the RHPN family. As to quaternary structure, interacts with GTP-bound RhoA and RhoB. Interacts with both GTP- and GDP-bound RhoA. Interacts with KRT18.

It localises to the cytoplasm. Its subcellular location is the perinuclear region. Its function is as follows. Binds specifically to GTP-Rho. May function in a Rho pathway to limit stress fiber formation and/or increase the turnover of F-actin structures in the absence of high levels of RhoA activity. This is Rhophilin-2 (Rhpn2) from Mus musculus (Mouse).